Consider the following 102-residue polypeptide: Small ribosomal subunit protein uS10 (102 aa).

The protein belongs to the universal ribosomal protein uS10 family. As to quaternary structure, part of the 30S ribosomal subunit.

Involved in the binding of tRNA to the ribosomes. In Methanospirillum hungatei JF-1 (strain ATCC 27890 / DSM 864 / NBRC 100397 / JF-1), this protein is Small ribosomal subunit protein uS10.